The sequence spans 456 residues: Enolase (456 aa).

Glutamine 164 contributes to the (2R)-2-phosphoglycerate binding site. Glutamate 207 serves as the catalytic Proton donor. Residues aspartate 244, glutamate 287, and aspartate 314 each coordinate Mg(2+). (2R)-2-phosphoglycerate is bound by residues lysine 339, arginine 368, serine 369, and lysine 390. The Proton acceptor role is filled by lysine 339.

It belongs to the enolase family. As to quaternary structure, component of the RNA degradosome, a multiprotein complex involved in RNA processing and mRNA degradation. Requires Mg(2+) as cofactor.

It localises to the cytoplasm. It is found in the secreted. The protein resides in the cell surface. It carries out the reaction (2R)-2-phosphoglycerate = phosphoenolpyruvate + H2O. Its pathway is carbohydrate degradation; glycolysis; pyruvate from D-glyceraldehyde 3-phosphate: step 4/5. Its function is as follows. Catalyzes the reversible conversion of 2-phosphoglycerate (2-PG) into phosphoenolpyruvate (PEP). It is essential for the degradation of carbohydrates via glycolysis. This chain is Enolase, found in Francisella tularensis subsp. holarctica (strain LVS).